A 304-amino-acid chain; its full sequence is Pyridoxal 5'-phosphate synthase subunit PdxS (304 aa).

Asp-34 is a D-ribose 5-phosphate binding site. Lys-91 (schiff-base intermediate with D-ribose 5-phosphate) is an active-site residue. Gly-163 is a D-ribose 5-phosphate binding site. Arg-175 serves as a coordination point for D-glyceraldehyde 3-phosphate. D-ribose 5-phosphate-binding positions include Gly-224 and 245 to 246 (GS).

This sequence belongs to the PdxS/SNZ family. In terms of assembly, in the presence of PdxT, forms a dodecamer of heterodimers.

It catalyses the reaction aldehydo-D-ribose 5-phosphate + D-glyceraldehyde 3-phosphate + L-glutamine = pyridoxal 5'-phosphate + L-glutamate + phosphate + 3 H2O + H(+). Its pathway is cofactor biosynthesis; pyridoxal 5'-phosphate biosynthesis. Catalyzes the formation of pyridoxal 5'-phosphate from ribose 5-phosphate (RBP), glyceraldehyde 3-phosphate (G3P) and ammonia. The ammonia is provided by the PdxT subunit. Can also use ribulose 5-phosphate and dihydroxyacetone phosphate as substrates, resulting from enzyme-catalyzed isomerization of RBP and G3P, respectively. The protein is Pyridoxal 5'-phosphate synthase subunit PdxS of Cutibacterium acnes (strain DSM 16379 / KPA171202) (Propionibacterium acnes).